Consider the following 351-residue polypeptide: Ribosomal RNA large subunit methyltransferase M (351 aa).

Residues Ser183, 216–219 (APGG), Asp235, Asp255, and Asp271 contribute to the S-adenosyl-L-methionine site. Lys300 functions as the Proton acceptor in the catalytic mechanism.

This sequence belongs to the class I-like SAM-binding methyltransferase superfamily. RNA methyltransferase RlmE family. RlmM subfamily. As to quaternary structure, monomer.

It localises to the cytoplasm. It catalyses the reaction cytidine(2498) in 23S rRNA + S-adenosyl-L-methionine = 2'-O-methylcytidine(2498) in 23S rRNA + S-adenosyl-L-homocysteine + H(+). Functionally, catalyzes the 2'-O-methylation at nucleotide C2498 in 23S rRNA. This is Ribosomal RNA large subunit methyltransferase M from Ectopseudomonas mendocina (strain ymp) (Pseudomonas mendocina).